The sequence spans 331 residues: Phosphoribosylformylglycinamidine cyclo-ligase (331 aa).

The protein belongs to the AIR synthase family.

It is found in the cytoplasm. The catalysed reaction is 2-formamido-N(1)-(5-O-phospho-beta-D-ribosyl)acetamidine + ATP = 5-amino-1-(5-phospho-beta-D-ribosyl)imidazole + ADP + phosphate + H(+). Its pathway is purine metabolism; IMP biosynthesis via de novo pathway; 5-amino-1-(5-phospho-D-ribosyl)imidazole from N(2)-formyl-N(1)-(5-phospho-D-ribosyl)glycinamide: step 2/2. In Clostridium tetani (strain Massachusetts / E88), this protein is Phosphoribosylformylglycinamidine cyclo-ligase.